The primary structure comprises 253 residues: ATP synthase subunit a (253 aa).

6 helical membrane passes run 34 to 54, 89 to 109, 118 to 138, 156 to 178, 203 to 223, and 226 to 246; these read SSLFLIIAVFLLLFWTSLSFY, YFPFIFTLHLLLLYCNLIGMI, HIVFTFGLALSIFIGINLIGI, LAIVPLLITIEFLSYIVKVFTLS, LSAGGLLAIFHLIPLALLLAL, and LELAIAGLQAYVFTLLTCIYL.

The protein belongs to the ATPase A chain family. As to quaternary structure, F-type ATPases have 2 components, CF(1) - the catalytic core - and CF(0) - the membrane proton channel. CF(1) has five subunits: alpha(3), beta(3), gamma(1), delta(1), epsilon(1). CF(0) has three main subunits: a, b and c.

It is found in the mitochondrion inner membrane. Mitochondrial membrane ATP synthase (F(1)F(0) ATP synthase or Complex V) produces ATP from ADP in the presence of a proton gradient across the membrane which is generated by electron transport complexes of the respiratory chain. F-type ATPases consist of two structural domains, F(1) - containing the extramembraneous catalytic core and F(0) - containing the membrane proton channel, linked together by a central stalk and a peripheral stalk. During catalysis, ATP synthesis in the catalytic domain of F(1) is coupled via a rotary mechanism of the central stalk subunits to proton translocation. Key component of the proton channel; it may play a direct role in the translocation of protons across the membrane. In Chondrus crispus (Carrageen Irish moss), this protein is ATP synthase subunit a (ATP6).